The sequence spans 888 residues: Bifunctional lysine-specific demethylase and histidyl-hydroxylase NO66 (888 aa).

3 disordered regions span residues 83-157 (AAAK…GSFS), 187-208 (SNNSDFDFDSDGDSNDFDDSDA), and 261-446 (NSTS…NKLS). Positions 98–108 (REKNIAKKQPE) are enriched in basic and acidic residues. Polar residues predominate over residues 116–139 (ENVQKQLENGQENNGTLINLSNGK). Over residues 192–207 (FDFDSDGDSNDFDDSD) the composition is skewed to acidic residues. A compositionally biased stretch (basic and acidic residues) spans 273–284 (VEPRKAAKRNEP). Positions 392–403 (KNKNNDNNNIDT) are enriched in low complexity. Basic and acidic residues predominate over residues 404–429 (NNKKDANNKKDANNNKDINNKKDANN). Residues 430 to 444 (NKDTNNNKDNNNKNK) show a composition bias toward low complexity. A JmjC domain is found at 564 to 709 (CSIRILNPST…NLLEVLMPSV (146 aa)). Positions 610, 612, and 675 each coordinate Fe cation.

This sequence belongs to the ROX family. NO66 subfamily. Fe(2+) is required as a cofactor.

The protein localises to the nucleus. It catalyses the reaction N(6),N(6)-dimethyl-L-lysyl(36)-[histone H3] + 2 2-oxoglutarate + 2 O2 = L-lysyl(36)-[histone H3] + 2 formaldehyde + 2 succinate + 2 CO2. Oxygenase that can act as both a histone lysine demethylase and a ribosomal histidine hydroxylase. Specifically demethylates 'Lys-4' (H3K4me) and 'Lys-36' (H3K36me) of histone H3, thereby playing a central role in histone code. This is Bifunctional lysine-specific demethylase and histidyl-hydroxylase NO66 from Drosophila mojavensis (Fruit fly).